The sequence spans 207 residues: Nuclear transcription factor Y subunit beta (207 aa).

Positions 1–52 (MTMDGDSSTTDASQLGISADYIGGSHYVIQPHDDTEDSMNDHEDTNGSKESF) are a domain. The interval 27–52 (YVIQPHDDTEDSMNDHEDTNGSKESF) is disordered. Residues 39–52 (MNDHEDTNGSKESF) show a composition bias toward basic and acidic residues. The interval 53–142 (REQDIYLPIA…PLKLYLQKFR (90 aa)) is b domain. A DNA-binding region spans residues 59–65 (LPIANVA). Positions 86-97 (VQECVSEFISFI) are subunit association domain (SAD). Lysine 140 is covalently cross-linked (Glycyl lysine isopeptide (Lys-Gly) (interchain with G-Cter in ubiquitin)). The tract at residues 143–207 (EAMKGEKGIG…ISGVQQIQFS (65 aa)) is c domain.

This sequence belongs to the NFYB/HAP3 subunit family. In terms of assembly, heterotrimeric transcription factor composed of three components, NF-YA, NF-YB and NF-YC. NF-YB and NF-YC must interact and dimerize for NF-YA association and DNA binding. Interacts with C1QBP. Post-translationally, monoubiquitination at Lys-140 plays an important role in transcriptional activation by allowing the deposition of histone H3 methylations as well as histone H2B monoubiquitination at 'Lys-121'.

The protein localises to the nucleus. Functionally, component of the sequence-specific heterotrimeric transcription factor (NF-Y) which specifically recognizes a 5'-CCAAT-3' box motif found in the promoters of its target genes. NF-Y can function as both an activator and a repressor, depending on its interacting cofactors. This chain is Nuclear transcription factor Y subunit beta (Nfyb), found in Mus musculus (Mouse).